The following is a 252-amino-acid chain: Cell division protein ZapD (252 aa).

This sequence belongs to the ZapD family. In terms of assembly, interacts with FtsZ.

The protein resides in the cytoplasm. In terms of biological role, cell division factor that enhances FtsZ-ring assembly. Directly interacts with FtsZ and promotes bundling of FtsZ protofilaments, with a reduction in FtsZ GTPase activity. In Cupriavidus taiwanensis (strain DSM 17343 / BCRC 17206 / CCUG 44338 / CIP 107171 / LMG 19424 / R1) (Ralstonia taiwanensis (strain LMG 19424)), this protein is Cell division protein ZapD.